Reading from the N-terminus, the 218-residue chain is MTQDEMKKAAGWAALEYVEAGSIVGVGTGSTVNHFIDALATMKNEIKGAVSSSVASTEKLKELGIEVFDCNDVAGLDVYVDGADEINGKNEMIKGGGAALTREKIVAAISDKFICIVDDTKQVDVLGQFPLPVEVIPMARSYVARELVKLGGDPAYREGVITDNGNVILDVHGMKITDAKDLEDKINALPGVVTVGLFAHRGADVLLVGAPEGVKKFD.

Residues 28–31 (TGST), 81–84 (DGAD), and 94–97 (KGGG) contribute to the substrate site. Glu-103 functions as the Proton acceptor in the catalytic mechanism. Lys-121 is a substrate binding site.

This sequence belongs to the ribose 5-phosphate isomerase family. Homodimer.

The catalysed reaction is aldehydo-D-ribose 5-phosphate = D-ribulose 5-phosphate. The protein operates within carbohydrate degradation; pentose phosphate pathway; D-ribose 5-phosphate from D-ribulose 5-phosphate (non-oxidative stage): step 1/1. Functionally, catalyzes the reversible conversion of ribose-5-phosphate to ribulose 5-phosphate. This Aliivibrio fischeri (strain ATCC 700601 / ES114) (Vibrio fischeri) protein is Ribose-5-phosphate isomerase A.